The sequence spans 403 residues: Tyrosine--tRNA ligase (403 aa).

Residues 42–51 (PTAPDLHLGH) carry the 'HIGH' region motif. The short motif at 226–230 (KMSKS) is the 'KMSKS' region element. Lys-229 is a binding site for ATP. The region spanning 336 to 396 (MPISAVLNKA…GKKAFGRITL (61 aa)) is the S4 RNA-binding domain.

It belongs to the class-I aminoacyl-tRNA synthetase family. TyrS type 2 subfamily. As to quaternary structure, homodimer.

Its subcellular location is the cytoplasm. It catalyses the reaction tRNA(Tyr) + L-tyrosine + ATP = L-tyrosyl-tRNA(Tyr) + AMP + diphosphate + H(+). Functionally, catalyzes the attachment of tyrosine to tRNA(Tyr) in a two-step reaction: tyrosine is first activated by ATP to form Tyr-AMP and then transferred to the acceptor end of tRNA(Tyr). This is Tyrosine--tRNA ligase from Pseudomonas syringae pv. tomato (strain ATCC BAA-871 / DC3000).